The sequence spans 692 residues: Elongation factor G 2 (692 aa).

The region spanning 8-283 is the tr-type G domain; that stretch reads EKTRNIGIMA…AVIDYMPSPV (276 aa). Residues 17–24, 81–85, and 135–138 contribute to the GTP site; these read AHIDAGKT, DTPGH, and NKMD.

This sequence belongs to the TRAFAC class translation factor GTPase superfamily. Classic translation factor GTPase family. EF-G/EF-2 subfamily.

Its subcellular location is the cytoplasm. Functionally, catalyzes the GTP-dependent ribosomal translocation step during translation elongation. During this step, the ribosome changes from the pre-translocational (PRE) to the post-translocational (POST) state as the newly formed A-site-bound peptidyl-tRNA and P-site-bound deacylated tRNA move to the P and E sites, respectively. Catalyzes the coordinated movement of the two tRNA molecules, the mRNA and conformational changes in the ribosome. This chain is Elongation factor G 2, found in Syntrophotalea carbinolica (strain DSM 2380 / NBRC 103641 / GraBd1) (Pelobacter carbinolicus).